A 2465-amino-acid polypeptide reads, in one-letter code: Protein DOP1A (2465 aa).

Disordered stretches follow at residues 559–600, 625–646, and 705–733; these read PSGQ…SSES, GAAA…TVGS, and TEHQ…KEKN. Residues 633–646 are compositionally biased toward low complexity; it reads STSSETETASTVGS. Residues 707-733 show a composition bias toward basic and acidic residues; it reads HQGDLGREQGETSKWDRNSQGDVKEKN. Residue serine 1266 is modified to Phosphoserine. 2 stretches are compositionally biased toward basic and acidic residues: residues 1282 to 1291 and 1305 to 1315; these read EKETIVKESG and KKDDDKKKSSN. Positions 1282–1315 are disordered; sequence EKETIVKESGKQPGAKPKVKLARKKDDDKKKSSN.

The protein belongs to the DOP1 family.

It is found in the golgi apparatus membrane. Functionally, may be involved in protein traffic between late Golgi and early endosomes. The sequence is that of Protein DOP1A from Homo sapiens (Human).